Consider the following 303-residue polypeptide: N-acetyl-D-glucosamine kinase (303 aa).

ATP-binding positions include 4–11 (GFDIGGTK) and 133–140 (GVGGGLIF). 4 residues coordinate Zn(2+): His-157, Cys-177, Cys-179, and Cys-184.

Belongs to the ROK (NagC/XylR) family. NagK subfamily.

It carries out the reaction N-acetyl-D-glucosamine + ATP = N-acetyl-D-glucosamine 6-phosphate + ADP + H(+). Its pathway is cell wall biogenesis; peptidoglycan recycling. In terms of biological role, catalyzes the phosphorylation of N-acetyl-D-glucosamine (GlcNAc) derived from cell-wall degradation, yielding GlcNAc-6-P. In Escherichia coli O6:H1 (strain CFT073 / ATCC 700928 / UPEC), this protein is N-acetyl-D-glucosamine kinase.